Reading from the N-terminus, the 390-residue chain is Probable purine permease 18 (390 aa).

Positions methionine 1–glycine 14 are enriched in polar residues. Residues methionine 1–isoleucine 23 form a disordered region. Serine 25 carries the phosphoserine modification. Transmembrane regions (helical) follow at residues isoleucine 39–leucine 59, tryptophan 81–phenylalanine 101, leucine 120–leucine 140, glycine 148–isoleucine 168, tryptophan 176–glycine 196, tryptophan 211–phenylalanine 231, valine 250–phenylalanine 270, isoleucine 297–valine 317, valine 324–methionine 344, and phenylalanine 348–tyrosine 368.

It belongs to the purine permeases (TC 2.A.7.14) family.

It is found in the membrane. The protein is Probable purine permease 18 (PUP18) of Arabidopsis thaliana (Mouse-ear cress).